We begin with the raw amino-acid sequence, 55 residues long: ATP synthase protein 8 (55 aa).

Residues 11–31 (LIMFSVTLMLLIVLVINHFML) form a helical membrane-spanning segment.

Belongs to the ATPase protein 8 family. In terms of assembly, F-type ATPases have 2 components, CF(1) - the catalytic core - and CF(0) - the membrane proton channel.

The protein resides in the mitochondrion membrane. In terms of biological role, mitochondrial membrane ATP synthase (F(1)F(0) ATP synthase or Complex V) produces ATP from ADP in the presence of a proton gradient across the membrane which is generated by electron transport complexes of the respiratory chain. F-type ATPases consist of two structural domains, F(1) - containing the extramembraneous catalytic core and F(0) - containing the membrane proton channel, linked together by a central stalk and a peripheral stalk. During catalysis, ATP synthesis in the catalytic domain of F(1) is coupled via a rotary mechanism of the central stalk subunits to proton translocation. Part of the complex F(0) domain. Minor subunit located with subunit a in the membrane. This Albinaria caerulea (Land snail) protein is ATP synthase protein 8 (MT-ATP8).